Here is a 126-residue protein sequence, read N- to C-terminus: MKQLESSIRIEVKTDYIEEQSSPEEERYLFSYTITIINLGDEAVTLKSRMWCITDANGHESKVEGAGVVGETPTIKPNTAYQYTSGTVCETPFAVMQGYYVMVTEQGETFKAPIAPFRLAAPGLLH.

An ApaG domain is found at 2 to 126 (KQLESSIRIE…FRLAAPGLLH (125 aa)).

The polypeptide is Protein ApaG (Shewanella loihica (strain ATCC BAA-1088 / PV-4)).